Consider the following 245-residue polypeptide: NLP effector protein Pc118551 (245 aa).

Residues methionine 1–alanine 19 form the signal peptide. Positions glutamine 121–glutamate 127 match the Hepta-peptide GHRHDWE motif motif. N-linked (GlcNAc...) asparagine glycosylation is present at asparagine 140.

Belongs to the Necrosis inducing protein (NPP1) family.

Its subcellular location is the secreted. Its function is as follows. Secreted effector that contributes strongly to virulence during infection by P.capsici. This is NLP effector protein Pc118551 from Phytophthora capsici.